The chain runs to 916 residues: DNA ligase 1 (916 aa).

Residues 1 to 10 (MQRSIMSFFQ) show a composition bias toward polar residues. A disordered region spans residues 1-197 (MQRSIMSFFQ…SPESVTLTKT (197 aa)). Residues 13–43 (KEGKAKKPEKETPSSIREKEPPPKVALKERN) show a composition bias toward basic and acidic residues. Phosphoserine is present on residues S49, S51, and S65. T77 bears the Phosphothreonine mark. Residues 99-111 (PENSPVFNCSSPM) show a composition bias toward polar residues. Basic residues predominate over residues 119–129 (PKRRTARKQLP). K144 bears the N6-acetyllysine mark. Residues 153-177 (KEEETPKESLAEAEDIKQKEEKEGD) are compositionally biased toward basic and acidic residues. Residues 185-197 (PTKSPESVTLTKT) are compositionally biased toward polar residues. The residue at position 193 (T193) is a Phosphothreonine. An N6-acetyllysine modification is found at K225. Phosphoserine is present on residues S228 and S229. T232 bears the Phosphothreonine mark. The tract at residues 236–266 (PAVKTEVKQEESGTLRKEETKGTLDPANYNP) is disordered. Residues 238–257 (VKTEVKQEESGTLRKEETKG) show a composition bias toward basic and acidic residues. An interaction with target DNA region spans residues 447–456 (RLRLGLAEQS). ATP is bound at residue E564. K566 acts as the N6-AMP-lysine intermediate in catalysis. ATP is bound by residues R571 and E619. E619 serves as a coordination point for Mg(2+). The segment at 640–642 (KRK) is interaction with target DNA. E718 is a Mg(2+) binding site. Residues K723 and K742 each coordinate ATP. Residue T796 is modified to Phosphothreonine. Residues S799, S906, S907, and S911 each carry the phosphoserine modification. The segment at 879-916 (DKQPEQATTSNQVASLYRKQSQIQNQQSSDLDSDVEDY) is disordered. A compositionally biased stretch (polar residues) spans 883–908 (EQATTSNQVASLYRKQSQIQNQQSSD).

It belongs to the ATP-dependent DNA ligase family. Interacts with PCNA. Interacts with POLB. It depends on Mg(2+) as a cofactor.

The protein localises to the nucleus. The enzyme catalyses ATP + (deoxyribonucleotide)n-3'-hydroxyl + 5'-phospho-(deoxyribonucleotide)m = (deoxyribonucleotide)n+m + AMP + diphosphate.. Its function is as follows. DNA ligase that seals nicks in double-stranded during DNA repair. Also involved in DNA replication and DNA recombination. The polypeptide is DNA ligase 1 (Lig1) (Mus musculus (Mouse)).